Consider the following 417-residue polypeptide: Histidine--tRNA ligase (417 aa).

This sequence belongs to the class-II aminoacyl-tRNA synthetase family.

It is found in the cytoplasm. It catalyses the reaction tRNA(His) + L-histidine + ATP = L-histidyl-tRNA(His) + AMP + diphosphate + H(+). The polypeptide is Histidine--tRNA ligase (Pyrobaculum neutrophilum (strain DSM 2338 / JCM 9278 / NBRC 100436 / V24Sta) (Thermoproteus neutrophilus)).